Consider the following 245-residue polypeptide: Purine nucleoside phosphorylase (245 aa).

H7 contributes to the a purine D-ribonucleoside binding site. Residues 23–27 (GDPGR), R45, and 88–91 (RAGS) contribute to the phosphate site. Residue 183–184 (ME) participates in a purine D-ribonucleoside binding. Residue D206 is the Proton donor of the active site.

The protein belongs to the PNP/MTAP phosphorylase family. As to quaternary structure, homohexamer; trimer of homodimers.

It carries out the reaction inosine + phosphate = alpha-D-ribose 1-phosphate + hypoxanthine. The enzyme catalyses guanosine + phosphate = alpha-D-ribose 1-phosphate + guanine. The catalysed reaction is 2'-deoxyguanosine + phosphate = 2-deoxy-alpha-D-ribose 1-phosphate + guanine. It catalyses the reaction 2'-deoxyinosine + phosphate = 2-deoxy-alpha-D-ribose 1-phosphate + hypoxanthine. It carries out the reaction S-methyl-5'-thioinosine + phosphate = 5-(methylsulfanyl)-alpha-D-ribose 1-phosphate + hypoxanthine. It functions in the pathway purine metabolism; purine nucleoside salvage. With respect to regulation, inhibited by Immucillin-H and 5'-methylthio-Immucillin-H. Inhibited by 5'-deaza-1'-aza-2c-deoxy-1'-(9-methylene)-Immucilin-G (DADMe-ImmG). Its function is as follows. As part of the purine salvage pathway, catalyzes the phosphorolytic breakdown of the N-glycosidic bond in the beta-(deoxy)ribonucleoside molecules, with the formation of the corresponding free purine bases and pentose-1-phosphate. Preferentially acts on inosine and guanosine, and to a lesser extent on 2'-deoxyguanosine and guanosine. Also catalyzes the phosphorylation of S-methyl-5'-thioinosine (MTI) to hypoxanthine; MTI is produced by adenosine deaminase (ADA)-mediated breakdown of S-methyl-5'-thioadenosine (MTA), a major by-product of polyamine biosynthesis. Generates hypoxanthine from both the purine salvage pathway and from polyamine metabolism which is required for nucleic acids synthesis. Has no activity towards adenosine. This is Purine nucleoside phosphorylase from Plasmodium falciparum (isolate 3D7).